Reading from the N-terminus, the 315-residue chain is Ribosomal RNA small subunit methyltransferase H (315 aa).

S-adenosyl-L-methionine-binding positions include 33–35 (GGH), Asp-52, Phe-84, Asp-106, and Gln-113.

It belongs to the methyltransferase superfamily. RsmH family.

The protein localises to the cytoplasm. It catalyses the reaction cytidine(1402) in 16S rRNA + S-adenosyl-L-methionine = N(4)-methylcytidine(1402) in 16S rRNA + S-adenosyl-L-homocysteine + H(+). In terms of biological role, specifically methylates the N4 position of cytidine in position 1402 (C1402) of 16S rRNA. The polypeptide is Ribosomal RNA small subunit methyltransferase H (Lactobacillus acidophilus (strain ATCC 700396 / NCK56 / N2 / NCFM)).